We begin with the raw amino-acid sequence, 867 residues long: MRVKGIRKNYQHLWRWGTMLLGILMICSAAEQLWVTVYYGVPVWKEAATTLFCASDAKAYDTEVHNVWATHACVPTDPNPQEVVLENVTEKFNMWKNNMVEQMHEDIISLWDQSLKPCVKLTPLCVTLNCIDWGNDTSPNATNTTSSGGEKMEKGEMKNCSFNITTSIRDKVQKEHALFYKHDVVPINNSTKDNIKNDNSTRYRLISCNTSVITQACPKISFEPIPIHYCAPAGFAIIKCNDKKFNGTGPCTNVSTVQCTHGIKPVVSTQLLLNGSLAEEEVVIRSENFTDNAKTIIVQLKEPVVINCTRPSKTTRRRIHIGPGRAFYTTKQIAGDLRQAHCNINRARWNATLKQIVGKLRKQFVNKTIVFNRSSGGDPEIVMHSFNCGGEFFYCNSTQLFNSTWLSNSTWNDTEGSNNTGGNDTITLPCRIKQIINMWQEVGKAMYAPPIEGQIRCSSNITGLLLTRDGGDNQNETETFRPGGGNMRDNWRSELYKYKVVKIELLGVAPTKAKRRVVQREKRAVGIGAVFLGFLGAAGSTMGASMTLTVQARLLLSGIVQQQNNLLRAIEGQQHLLQLTVWGIKQLQARILAVERYLKDQQLLGIWGCSGKLICTTAVPWNASWSNKSLEEIWDNMTWMEWEREIDNYTSLIYTLIEESQNQQEKNEQELLGLDKWASLWNWFTITNWLWYIRIFIMIVGGLVGLRIVFTVLSIVNRVRQGYSPLSFQTRLPAPRGPDRPEGIEEEGGDRDRDRSGQLVDGLLAIIWVDLRSLCLFSYHRLRDLLLIVTRIVELLGRRGWEALKYWWNLLQYWSQELKNSAVSLFNAIAIAVAEGTDRVLKILQRAFRAILHIPTRIRQGLERALL.

A signal peptide spans 1–31 (MRVKGIRKNYQHLWRWGTMLLGILMICSAAE). Residues 32–695 (QLWVTVYYGV…ITNWLWYIRI (664 aa)) lie on the Extracellular side of the membrane. Cys-53 and Cys-73 are oxidised to a cystine. 15 N-linked (GlcNAc...) asparagine; by host glycosylation sites follow: Asn-87, Asn-135, Asn-140, Asn-143, Asn-159, Asn-163, Asn-188, Asn-189, Asn-199, Asn-209, Asn-246, Asn-253, Asn-274, Asn-288, and Asn-307. 5 cysteine pairs are disulfide-bonded: Cys-118/Cys-217, Cys-125/Cys-208, Cys-130/Cys-160, Cys-230/Cys-259, and Cys-240/Cys-251. The V1 stretch occupies residues 130 to 159 (CIDWGNDTSPNATNTTSSGGEKMEKGEMKN). The interval 160 to 208 (CSFNITTSIRDKVQKEHALFYKHDVVPINNSTKDNIKNDNSTRYRLISC) is V2. The V3 stretch occupies residues 308–341 (CTRPSKTTRRRIHIGPGRAFYTTKQIAGDLRQAH). Cys-308 and Cys-342 are oxidised to a cystine. N-linked (GlcNAc...) asparagine; by host glycans are attached at residues Asn-350, Asn-366, and Asn-372. A CD4-binding loop region spans residues 374–384 (SSGGDPEIVMH). Disulfide bonds link Cys-388–Cys-457 and Cys-395–Cys-430. Positions 395–430 (CNSTQLFNSTWLSNSTWNDTEGSNNTGGNDTITLPC) are V4. 8 N-linked (GlcNAc...) asparagine; by host glycosylation sites follow: Asn-396, Asn-402, Asn-408, Asn-412, Asn-418, Asn-423, Asn-460, and Asn-475. 2 V5 regions span residues 473–483 (NQNETETFRPG) and 475–483 (NETETFRPG). Residues 524 to 544 (AVGIGAVFLGFLGAAGSTMGA) are fusion peptide. The immunosuppression stretch occupies residues 585-603 (KQLQARILAVERYLKDQQL). An intrachain disulfide couples Cys-609 to Cys-615. N-linked (GlcNAc...) asparagine; by host glycans are attached at residues Asn-622, Asn-627, Asn-636, and Asn-648. Residues 644 to 678 (REIDNYTSLIYTLIEESQNQQEKNEQELLGLDKWA) are a coiled coil. The interval 673–694 (GLDKWASLWNWFTITNWLWYIR) is MPER; binding to GalCer. The helical transmembrane segment at 696–716 (FIMIVGGLVGLRIVFTVLSIV) threads the bilayer. The Cytoplasmic segment spans residues 717–867 (NRVRQGYSPL…IRQGLERALL (151 aa)). The YXXL motif; contains endocytosis signal signature appears at 723-726 (YSPL). The disordered stretch occupies residues 730–755 (TRLPAPRGPDRPEGIEEEGGDRDRDR). Cys-775 is lipidated: S-palmitoyl cysteine; by host. The Di-leucine internalization motif signature appears at 866-867 (LL).

Belongs to the HIV-1 env protein family. As to quaternary structure, the mature envelope protein (Env) consists of a homotrimer of non-covalently associated gp120-gp41 heterodimers. The resulting complex protrudes from the virus surface as a spike. There seems to be as few as 10 spikes on the average virion. Interacts with host CD4, CCR5 and CXCR4. Gp120 also interacts with the C-type lectins CD209/DC-SIGN and CLEC4M/DC-SIGNR (collectively referred to as DC-SIGN(R)). Gp120 and gp41 interact with GalCer. Gp120 interacts with host ITGA4/ITGB7 complex; on CD4+ T-cells, this interaction results in rapid activation of integrin ITGAL/LFA-1, which facilitates efficient cell-to-cell spreading of HIV-1. Gp120 interacts with cell-associated heparan sulfate; this interaction increases virus infectivity on permissive cells and may be involved in infection of CD4- cells. The mature envelope protein (Env) consists of a homotrimer of non-covalently associated gp120-gp41 heterodimers. The resulting complex protrudes from the virus surface as a spike. There seems to be as few as 10 spikes on the average virion. Post-translationally, highly glycosylated by host. The high number of glycan on the protein is reffered to as 'glycan shield' because it contributes to hide protein sequence from adaptive immune system. Palmitoylation of the transmembrane protein and of Env polyprotein (prior to its proteolytic cleavage) is essential for their association with host cell membrane lipid rafts. Palmitoylation is therefore required for envelope trafficking to classical lipid rafts, but not for viral replication. In terms of processing, specific enzymatic cleavages in vivo yield mature proteins. Envelope glycoproteins are synthesized as an inactive precursor that is heavily N-glycosylated and processed likely by host cell furin in the Golgi to yield the mature SU and TM proteins. The cleavage site between SU and TM requires the minimal sequence [KR]-X-[KR]-R. About 2 of the 9 disulfide bonds of gp41 are reduced by P4HB/PDI, following binding to CD4 receptor.

It localises to the virion membrane. The protein localises to the host cell membrane. Its subcellular location is the host endosome membrane. In terms of biological role, oligomerizes in the host endoplasmic reticulum into predominantly trimers. In a second time, gp160 transits in the host Golgi, where glycosylation is completed. The precursor is then proteolytically cleaved in the trans-Golgi and thereby activated by cellular furin or furin-like proteases to produce gp120 and gp41. Functionally, attaches the virus to the host lymphoid cell by binding to the primary receptor CD4. This interaction induces a structural rearrangement creating a high affinity binding site for a chemokine coreceptor like CXCR4 and/or CCR5. Acts as a ligand for CD209/DC-SIGN and CLEC4M/DC-SIGNR, which are respectively found on dendritic cells (DCs), and on endothelial cells of liver sinusoids and lymph node sinuses. These interactions allow capture of viral particles at mucosal surfaces by these cells and subsequent transmission to permissive cells. HIV subverts the migration properties of dendritic cells to gain access to CD4+ T-cells in lymph nodes. Virus transmission to permissive T-cells occurs either in trans (without DCs infection, through viral capture and transmission), or in cis (following DCs productive infection, through the usual CD4-gp120 interaction), thereby inducing a robust infection. In trans infection, bound virions remain infectious over days and it is proposed that they are not degraded, but protected in non-lysosomal acidic organelles within the DCs close to the cell membrane thus contributing to the viral infectious potential during DCs' migration from the periphery to the lymphoid tissues. On arrival at lymphoid tissues, intact virions recycle back to DCs' cell surface allowing virus transmission to CD4+ T-cells. Acts as a class I viral fusion protein. Under the current model, the protein has at least 3 conformational states: pre-fusion native state, pre-hairpin intermediate state, and post-fusion hairpin state. During fusion of viral and target intracellular membranes, the coiled coil regions (heptad repeats) assume a trimer-of-hairpins structure, positioning the fusion peptide in close proximity to the C-terminal region of the ectodomain. The formation of this structure appears to drive apposition and subsequent fusion of viral and target cell membranes. Complete fusion occurs in host cell endosomes and is dynamin-dependent, however some lipid transfer might occur at the plasma membrane. The virus undergoes clathrin-dependent internalization long before endosomal fusion, thus minimizing the surface exposure of conserved viral epitopes during fusion and reducing the efficacy of inhibitors targeting these epitopes. Membranes fusion leads to delivery of the nucleocapsid into the cytoplasm. The sequence is that of Envelope glycoprotein gp160 from Homo sapiens (Human).